We begin with the raw amino-acid sequence, 356 residues long: UDP-N-acetylglucosamine--N-acetylmuramyl-(pentapeptide) pyrophosphoryl-undecaprenol N-acetylglucosamine transferase (356 aa).

Residues 14–16 (TGG), N126, R162, S190, I244, and Q289 each bind UDP-N-acetyl-alpha-D-glucosamine.

It belongs to the glycosyltransferase 28 family. MurG subfamily.

The protein resides in the cell inner membrane. It carries out the reaction di-trans,octa-cis-undecaprenyl diphospho-N-acetyl-alpha-D-muramoyl-L-alanyl-D-glutamyl-meso-2,6-diaminopimeloyl-D-alanyl-D-alanine + UDP-N-acetyl-alpha-D-glucosamine = di-trans,octa-cis-undecaprenyl diphospho-[N-acetyl-alpha-D-glucosaminyl-(1-&gt;4)]-N-acetyl-alpha-D-muramoyl-L-alanyl-D-glutamyl-meso-2,6-diaminopimeloyl-D-alanyl-D-alanine + UDP + H(+). It functions in the pathway cell wall biogenesis; peptidoglycan biosynthesis. Its function is as follows. Cell wall formation. Catalyzes the transfer of a GlcNAc subunit on undecaprenyl-pyrophosphoryl-MurNAc-pentapeptide (lipid intermediate I) to form undecaprenyl-pyrophosphoryl-MurNAc-(pentapeptide)GlcNAc (lipid intermediate II). This is UDP-N-acetylglucosamine--N-acetylmuramyl-(pentapeptide) pyrophosphoryl-undecaprenol N-acetylglucosamine transferase from Cupriavidus pinatubonensis (strain JMP 134 / LMG 1197) (Cupriavidus necator (strain JMP 134)).